Reading from the N-terminus, the 292-residue chain is 4-hydroxy-tetrahydrodipicolinate synthase (292 aa).

Threonine 46 provides a ligand contact to pyruvate. Tyrosine 134 functions as the Proton donor/acceptor in the catalytic mechanism. The Schiff-base intermediate with substrate role is filled by lysine 162. Isoleucine 204 contacts pyruvate.

The protein belongs to the DapA family. Homotetramer; dimer of dimers.

Its subcellular location is the cytoplasm. It catalyses the reaction L-aspartate 4-semialdehyde + pyruvate = (2S,4S)-4-hydroxy-2,3,4,5-tetrahydrodipicolinate + H2O + H(+). Its pathway is amino-acid biosynthesis; L-lysine biosynthesis via DAP pathway; (S)-tetrahydrodipicolinate from L-aspartate: step 3/4. Functionally, catalyzes the condensation of (S)-aspartate-beta-semialdehyde [(S)-ASA] and pyruvate to 4-hydroxy-tetrahydrodipicolinate (HTPA). The protein is 4-hydroxy-tetrahydrodipicolinate synthase of Moorella thermoacetica (strain ATCC 39073 / JCM 9320).